Here is a 124-residue protein sequence, read N- to C-terminus: Hydrogenase maturation factor HypA (124 aa).

Residue H2 coordinates Ni(2+). Residues C78, C81, C97, and C100 each contribute to the Zn(2+) site.

The protein belongs to the HypA/HybF family.

In terms of biological role, involved in the maturation of [NiFe] hydrogenases. Required for nickel insertion into the metal center of the hydrogenase. The chain is Hydrogenase maturation factor HypA from Methanococcus vannielii (strain ATCC 35089 / DSM 1224 / JCM 13029 / OCM 148 / SB).